The chain runs to 229 residues: Endonuclease NucS (229 aa).

It belongs to the NucS endonuclease family.

It is found in the cytoplasm. Its function is as follows. Cleaves both 3' and 5' ssDNA extremities of branched DNA structures. This chain is Endonuclease NucS, found in Corynebacterium diphtheriae (strain ATCC 700971 / NCTC 13129 / Biotype gravis).